Reading from the N-terminus, the 1241-residue chain is DNA-directed RNA polymerase subunit beta (1241 aa).

The disordered stretch occupies residues 1195-1219 (PQDVQENVSGENVDAGYENEDVDID).

This sequence belongs to the RNA polymerase beta chain family. As to quaternary structure, the RNAP catalytic core consists of 2 alpha, 1 beta, 1 beta' and 1 omega subunit. When a sigma factor is associated with the core the holoenzyme is formed, which can initiate transcription.

It catalyses the reaction RNA(n) + a ribonucleoside 5'-triphosphate = RNA(n+1) + diphosphate. DNA-dependent RNA polymerase catalyzes the transcription of DNA into RNA using the four ribonucleoside triphosphates as substrates. This is DNA-directed RNA polymerase subunit beta from Clostridium acetobutylicum (strain ATCC 824 / DSM 792 / JCM 1419 / IAM 19013 / LMG 5710 / NBRC 13948 / NRRL B-527 / VKM B-1787 / 2291 / W).